Here is a 436-residue protein sequence, read N- to C-terminus: Flagellum-specific ATP synthase (436 aa).

Residue 165–172 (SGSGVGKS) coordinates ATP.

The protein belongs to the ATPase alpha/beta chains family.

It is found in the cytoplasm. The enzyme catalyses ATP + H2O + 4 H(+)(in) = ADP + phosphate + 5 H(+)(out). In terms of biological role, probable catalytic subunit of a protein translocase for flagellum-specific export, or a proton translocase involved in local circuits at the flagellum. May be involved in a specialized protein export pathway that proceeds without signal peptide cleavage. The sequence is that of Flagellum-specific ATP synthase (fliI) from Borreliella burgdorferi (strain ATCC 35210 / DSM 4680 / CIP 102532 / B31) (Borrelia burgdorferi).